We begin with the raw amino-acid sequence, 911 residues long: Androgen receptor (911 aa).

The interval 1 to 549 is modulating; it reads MEVQLGLGRV…PIDYYFPPQK (549 aa). The tract at residues 1–578 is interaction with ZNF318; it reads MEVQLGLGRV…GSCKVFFKRA (578 aa). 2 disordered regions span residues 35 to 164 and 192 to 225; these read QNPG…LSLL and QQQQ…YLGG. Low complexity predominate over residues 44–88; it reads AASAAPPGASLLLQQQQQQQQQQQQQQQQQQQQQQETSPRQQQQQ. A Phosphoserine; by CDK9 modification is found at Ser-81. The residue at position 93 (Ser-93) is a Phosphoserine. Residues 192–214 show a composition bias toward low complexity; the sequence is QQQQQEAVSEGSSSGRAREASGA. The segment covering 215–225 has biased composition (polar residues); that stretch reads PTSSKDNYLGG. Residue Tyr-222 is modified to Phosphotyrosine; by CSK. A Phosphoserine modification is found at Ser-255. A Phosphotyrosine; by CSK and TNK2 modification is found at Tyr-266. Tyr-306, Tyr-345, Tyr-356, and Tyr-361 each carry phosphotyrosine; by CSK. Position 362 is a phosphotyrosine; by CSK and TNK2 (Tyr-362). Lys-385 participates in a covalent cross-link: Glycyl lysine isopeptide (Lys-Gly) (interchain with G-Cter in SUMO). A Phosphotyrosine; by CSK modification is found at Tyr-392. Lys-512 is covalently cross-linked (Glycyl lysine isopeptide (Lys-Gly) (interchain with G-Cter in SUMO)). A phosphotyrosine; by CSK mark is found at Tyr-526 and Tyr-543. An interaction with LPXN region spans residues 543-910; that stretch reads YYFPPQKTCL…GKVKPIYFHT (368 aa). 2 consecutive NR C4-type zinc fingers follow at residues 551 to 571 and 587 to 611; these read CLIC…CGSC and CASR…LRKC. Residues 551–623 constitute a DNA-binding region (nuclear receptor); it reads CLICGDEASG…AGMTLGARKL (73 aa). The segment at 563 to 653 is interaction with HIPK3; it reads YGALTCGSCK…TEETTQKLTV (91 aa). Residues 583 to 910 are interaction with CCAR1; sequence QKYLCASRND…GKVKPIYFHT (328 aa). Residues 616-910 are interaction with KAT7; that stretch reads MTLGARKLKK…GKVKPIYFHT (295 aa). A Phosphoserine; by STK4/MST1 modification is found at Ser-642. The region spanning 660 to 891 is the NR LBD domain; that stretch reads ECQPIFLNVL…DFPEMMAEII (232 aa). Residues Asn-697 and Arg-744 each coordinate 17beta-hydroxy-5alpha-androstan-3-one. Residues Lys-837 and Lys-839 each participate in a glycyl lysine isopeptide (Lys-Gly) (interchain with G-Cter in ubiquitin) cross-link. Thr-869 serves as a coordination point for 17beta-hydroxy-5alpha-androstan-3-one. Residue Tyr-907 is modified to Phosphotyrosine; by CSK.

The protein belongs to the nuclear hormone receptor family. NR3 subfamily. As to quaternary structure, binds DNA as a homodimer. Part of a ternary complex containing AR, EFCAB6/DJBP and PARK7. Interacts with HIPK3 and NR0B2 in the presence of androgen. The ligand binding domain interacts with KAT7/HBO1 in the presence of dihydrotestosterone. Interacts with EFCAB6/DJBP, PQBP1, RANBP9, RBAK, SPDEF, SRA1, TGFB1I1 and RREB1. Interacts with ZMIZ1/ZIMP10 and ZMIZ2/ZMIP7 which both enhance its transactivation activity. Interacts with SLC30A9 and RAD54L2/ARIP4. Interacts with MACROD1 (via macro domain). Interacts via the ligand-binding domain with LXXLL and FXXLF motifs from NCOA1, NCOA2, NCOA3 and MAGEA11. Interacts (via nuclear receptor DNA binding domain and nuclear receptor ligand binding domain) with NCOA4. The AR N-terminal poly-Gln region binds Ran resulting in enhancement of AR-mediated transactivation. Ran-binding decreases as the poly-Gln length increases. Interacts with HIP1 (via coiled coil domain). Interacts (via ligand-binding domain) with TRIM68. Interacts with TNK2. Interacts with USP26. Interacts with RNF6. Interacts (regulated by RNF6 probably through polyubiquitination) with RNF14; regulates AR transcriptional activity. Interacts with PRMT2 and TRIM24. Interacts with RACK1. Interacts with RANBP10; this interaction enhances dihydrotestosterone-induced AR transcriptional activity. Interacts with PRPF6 in a hormone-independent way; this interaction enhances dihydrotestosterone-induced AR transcriptional activity. Interacts with STK4/MST1. Interacts with ZIPK/DAPK3. Interacts with LPXN. Interacts with MAK. Part of a complex containing AR, MAK and NCOA3. Interacts with CRY1. Interacts with CCAR1 and GATA2. Interacts with ZNF318. Interacts with BUD31. Interacts with ARID4A. Interacts with ARID4B. Interacts (via NR LBD domain) with ZBTB7A; the interaction is direct and androgen-dependent. Interacts with NCOR1. Interacts with NCOR2. Interacts with CRY2 in a ligand-dependent manner. Post-translationally, phosphorylated in prostate cancer cells in response to several growth factors including EGF. Phosphorylation is induced by c-Src kinase (CSK). Tyr-526 is one of the major phosphorylation sites and an increase in phosphorylation and Src kinase activity is associated with prostate cancer progression. Phosphorylation by TNK2 enhances the DNA-binding and transcriptional activity. Phosphorylation at Ser-81 by CDK9 regulates AR promoter selectivity and cell growth. Sumoylated on Lys-385 (major) and Lys-512. Ubiquitinated. Deubiquitinated by USP26. 'Lys-6' and 'Lys-27'-linked polyubiquitination by RNF6 modulates AR transcriptional activity and specificity. In terms of processing, palmitoylated by ZDHHC7 and ZDHHC21. Palmitoylation is required for plasma membrane targeting and for rapid intracellular signaling via ERK and AKT kinases and cAMP generation.

It localises to the nucleus. It is found in the cytoplasm. Functionally, steroid hormone receptors are ligand-activated transcription factors that regulate eukaryotic gene expression and affect cellular proliferation and differentiation in target tissues. Transcription factor activity is modulated by bound coactivator and corepressor proteins like ZBTB7A that recruits NCOR1 and NCOR2 to the androgen response elements/ARE on target genes, negatively regulating androgen receptor signaling and androgen-induced cell proliferation. Transcription activation is also down-regulated by NR0B2. Activated, but not phosphorylated, by HIPK3 and ZIPK/DAPK3. The sequence is that of Androgen receptor (AR) from Pan troglodytes (Chimpanzee).